Reading from the N-terminus, the 151-residue chain is MELLIDNRQDRYEITDALIELINKAVEACLIYEGWEIDYEVSLSFVDNQEIQALNHTYRGKDYATDVLSFPLIEENQGLDLEEKLLGDIVISVEKAAEQAKEYNHSFEREMGFLVVHSMFHLMGYDHDHDEATADMRKREEAVLTAINLLR.

Zn(2+) contacts are provided by His-117, His-121, and His-127.

The protein belongs to the endoribonuclease YbeY family. Requires Zn(2+) as cofactor.

Its subcellular location is the cytoplasm. In terms of biological role, single strand-specific metallo-endoribonuclease involved in late-stage 70S ribosome quality control and in maturation of the 3' terminus of the 16S rRNA. In Alkaliphilus oremlandii (strain OhILAs) (Clostridium oremlandii (strain OhILAs)), this protein is Endoribonuclease YbeY.